The sequence spans 539 residues: GMP synthase [glutamine-hydrolyzing] (539 aa).

Positions 4-203 (KILILDFGSQ…VHDICGCKSD (200 aa)) constitute a Glutamine amidotransferase type-1 domain. Cysteine 82 serves as the catalytic Nucleophile. Catalysis depends on residues histidine 177 and glutamate 179. The region spanning 204–395 (WNMPDYIAEA…LGLPHDMVYR (192 aa)) is the GMPS ATP-PPase domain. 231–237 (SGGVDSS) contacts ATP.

Homodimer.

The enzyme catalyses XMP + L-glutamine + ATP + H2O = GMP + L-glutamate + AMP + diphosphate + 2 H(+). It participates in purine metabolism; GMP biosynthesis; GMP from XMP (L-Gln route): step 1/1. In terms of biological role, catalyzes the synthesis of GMP from XMP. In Herminiimonas arsenicoxydans, this protein is GMP synthase [glutamine-hydrolyzing].